The sequence spans 74 residues: Translation initiation factor IF-1 (74 aa).

Residues 1-72 (MAKETEMEFE…TRGRITYRKI (72 aa)) form the S1-like domain.

Belongs to the IF-1 family. In terms of assembly, component of the 30S ribosomal translation pre-initiation complex which assembles on the 30S ribosome in the order IF-2 and IF-3, IF-1 and N-formylmethionyl-tRNA(fMet); mRNA recruitment can occur at any time during PIC assembly.

Its subcellular location is the cytoplasm. In terms of biological role, one of the essential components for the initiation of protein synthesis. Stabilizes the binding of IF-2 and IF-3 on the 30S subunit to which N-formylmethionyl-tRNA(fMet) subsequently binds. Helps modulate mRNA selection, yielding the 30S pre-initiation complex (PIC). Upon addition of the 50S ribosomal subunit IF-1, IF-2 and IF-3 are released leaving the mature 70S translation initiation complex. The protein is Translation initiation factor IF-1 of Mycoplasma capricolum subsp. capricolum (strain California kid / ATCC 27343 / NCTC 10154).